The following is a 376-amino-acid chain: Succinyl-diaminopimelate desuccinylase (376 aa).

His67 is a Zn(2+) binding site. Residue Asp69 is part of the active site. Asp100 is a Zn(2+) binding site. Glu134 acts as the Proton acceptor in catalysis. Zn(2+) is bound by residues Glu135, Glu163, and His349.

It belongs to the peptidase M20A family. DapE subfamily. In terms of assembly, homodimer. Zn(2+) is required as a cofactor. Requires Co(2+) as cofactor.

The catalysed reaction is N-succinyl-(2S,6S)-2,6-diaminopimelate + H2O = (2S,6S)-2,6-diaminopimelate + succinate. The protein operates within amino-acid biosynthesis; L-lysine biosynthesis via DAP pathway; LL-2,6-diaminopimelate from (S)-tetrahydrodipicolinate (succinylase route): step 3/3. Functionally, catalyzes the hydrolysis of N-succinyl-L,L-diaminopimelic acid (SDAP), forming succinate and LL-2,6-diaminopimelate (DAP), an intermediate involved in the bacterial biosynthesis of lysine and meso-diaminopimelic acid, an essential component of bacterial cell walls. In Actinobacillus succinogenes (strain ATCC 55618 / DSM 22257 / CCUG 43843 / 130Z), this protein is Succinyl-diaminopimelate desuccinylase.